Reading from the N-terminus, the 30-residue chain is Snaclec carinactivase-1 regulatory subunit 17 kDa chain (30 aa).

The C-type lectin domain maps to 1–30 (DCLPGWSSHEGHCYKVFNQEMYWADAEKFC). Residues Cys-2 and Cys-13 are joined by a disulfide bond.

It belongs to the snaclec family. In terms of assembly, heterodimer of a metalloproteinase subunit and a regulatory subunit comprising two polypeptides disulfide-linked (14 kDa and 17 kDa chains). Expressed by the venom gland.

Its subcellular location is the secreted. Functionally, calcium-dependent prothrombin activator. This protein may activate prothrombin via recognition by the regulatory subunit of the calcium ion bound conformation of its gamma-carboxyglutamic acid (GLA) domain, and the subsequent conversion of prothrombin to active thrombin is catalyzed by the catalytic subunit. This chain is Snaclec carinactivase-1 regulatory subunit 17 kDa chain, found in Echis carinatus (Saw-scaled viper).